Here is a 264-residue protein sequence, read N- to C-terminus: Molybdenum transport system permease protein ModB (264 aa).

Helical transmembrane passes span 11-31 (VYLP…AIAI), 57-77 (TAAA…LVLA), 90-110 (LILL…LYAF), 127-147 (IAFS…PYLV), 176-196 (WWRV…VLAF), and 234-254 (AAVA…LGVG). One can recognise an ABC transmembrane type-1 domain in the interval 51–253 (LLLSVKTAAA…VVAALVVLGV (203 aa)).

Belongs to the binding-protein-dependent transport system permease family. CysTW subfamily.

Its subcellular location is the cell membrane. In terms of biological role, part of the binding-protein-dependent transport system ModABCD for molybdenum; probably responsible for the translocation of the substrate across the membrane. The protein is Molybdenum transport system permease protein ModB (modB) of Mycobacterium bovis (strain ATCC BAA-935 / AF2122/97).